The chain runs to 221 residues: Germin-like protein subfamily 1 member 17 (221 aa).

A signal peptide spans 1 to 21 (MKVSMSLILITLSALVTIAKA). A disulfide bridge connects residues Cys31 and Cys48. The Cupin type-1 domain maps to 76–213 (SNVTTVNVDQ…AFQLDVNVVK (138 aa)). N-linked (GlcNAc...) asparagine glycosylation is present at Asn77. Residues His110, His112, Glu117, and His159 each contribute to the Mn(2+) site.

The protein belongs to the germin family. In terms of assembly, oligomer (believed to be a pentamer but probably hexamer).

Its subcellular location is the secreted. The protein localises to the extracellular space. It is found in the apoplast. Functionally, may play a role in plant defense. Probably has no oxalate oxidase activity even if the active site is conserved. The chain is Germin-like protein subfamily 1 member 17 from Arabidopsis thaliana (Mouse-ear cress).